The sequence spans 299 residues: UDP-N-acetylenolpyruvoylglucosamine reductase (299 aa).

Residues 28 to 193 (IGGPVDLMVL…VSALMQLHKE (166 aa)) form the FAD-binding PCMH-type domain. Residue arginine 172 is part of the active site. Serine 222 functions as the Proton donor in the catalytic mechanism. Glutamate 292 is a catalytic residue.

Belongs to the MurB family. FAD serves as cofactor.

The protein localises to the cytoplasm. It carries out the reaction UDP-N-acetyl-alpha-D-muramate + NADP(+) = UDP-N-acetyl-3-O-(1-carboxyvinyl)-alpha-D-glucosamine + NADPH + H(+). The protein operates within cell wall biogenesis; peptidoglycan biosynthesis. Functionally, cell wall formation. This Syntrophomonas wolfei subsp. wolfei (strain DSM 2245B / Goettingen) protein is UDP-N-acetylenolpyruvoylglucosamine reductase.